A 181-amino-acid polypeptide reads, in one-letter code: Deoxyuridine 5'-triphosphate nucleotidohydrolase (181 aa).

Substrate is bound by residues 96–98, Asn109, 113–115, and Lys123; these read RSG and TVD.

The protein belongs to the dUTPase family. The cofactor is Mg(2+).

The catalysed reaction is dUTP + H2O = dUMP + diphosphate + H(+). The protein operates within pyrimidine metabolism; dUMP biosynthesis; dUMP from dCTP (dUTP route): step 2/2. Functionally, this enzyme is involved in nucleotide metabolism: it produces dUMP, the immediate precursor of thymidine nucleotides and it decreases the intracellular concentration of dUTP so that uracil cannot be incorporated into DNA. The protein is Deoxyuridine 5'-triphosphate nucleotidohydrolase of Corynebacterium efficiens (strain DSM 44549 / YS-314 / AJ 12310 / JCM 11189 / NBRC 100395).